Here is a 998-residue protein sequence, read N- to C-terminus: Antigenic heat-stable 120 kDa protein (998 aa).

A disordered region spans residues 1-69 (GGFMSQDHTG…LSGTISTDDQ (69 aa)). Residues 12 to 21 (ENDEGYESDI) show a composition bias toward acidic residues. A compositionally biased stretch (polar residues) spans 46 to 68 (TPASSTQSTPAISTLSGTISTDD).

It is found in the cytoplasm. This chain is Antigenic heat-stable 120 kDa protein (sca4), found in Rickettsia akari.